Reading from the N-terminus, the 261-residue chain is MDPTSFDKTKLCFGKPTKFSKVAGAHIINIRYEDKVTKAKVPLSFHTPILFSFGAKTSSFQDGDDNWSMSLMCYDTNKGPSPQETAFIKALEAIECRVKKHLKDKDVKKATEMYQDPLIDMMSMFYRKMEDGVVVPDRAPALYPKLLKSKNNPGQVATGFYKFVRGKEVKIPVVKEKCRVLCDLAIDSIFLGAKPSIQIKLVDVFLVELIGERKKTLKLSKLPSAVQAEINKYSADTDEEEEEEEDNAEDTEEEEEEEADQ.

The tract at residues 230–261 (INKYSADTDEEEEEEEDNAEDTEEEEEEEADQ) is disordered. Acidic residues predominate over residues 236-261 (DTDEEEEEEEDNAEDTEEEEEEEADQ).

The chain is Early 31 kDa protein from Frog virus 3 (isolate Goorha) (FV-3).